The following is a 376-amino-acid chain: E3 ubiquitin-protein ligase RNF133 (376 aa).

The region spanning 65–167 (SSTLKRVAGV…LKGTEIFHLI (103 aa)) is the PA domain. Residues 190-210 (YLVSFVIVTTATLAYFIFYHI) traverse the membrane as a helical segment. The segment at 256–297 (CVICFEHYKPNDIVRILTCKHFFHKNCIDPWILSHGTCPICK) adopts an RING-type; atypical zinc-finger fold. The segment at 328 to 376 (TLSPSEEETNNEVSPAGTSDKVIHVEENPTSQNNDSQPHSVVEDVHPSP) is disordered. The span at 355–366 (NPTSQNNDSQPH) shows a compositional bias: polar residues.

As to quaternary structure, interacts with E3 ligase UBE2J1. Post-translationally, auto-ubiquitinated.

The protein localises to the endoplasmic reticulum membrane. It carries out the reaction S-ubiquitinyl-[E2 ubiquitin-conjugating enzyme]-L-cysteine + [acceptor protein]-L-lysine = [E2 ubiquitin-conjugating enzyme]-L-cysteine + N(6)-ubiquitinyl-[acceptor protein]-L-lysine.. It participates in protein modification; protein ubiquitination. Its function is as follows. Has E3 ubiquitin-protein ligase activity. Plays a role in male fecundity through the interaction with the E2 ubituitin-protein ligase UBE2J1. The sequence is that of E3 ubiquitin-protein ligase RNF133 (RNF133) from Macaca fascicularis (Crab-eating macaque).